We begin with the raw amino-acid sequence, 545 residues long: CTP synthase (545 aa).

The tract at residues 1 to 266 (MTTNYIFVTG…DDYICKRFSL (266 aa)) is amidoligase domain. A CTP-binding site is contributed by Ser14. Ser14 is a UTP binding site. ATP-binding positions include 15 to 20 (SLGKGI) and Asp72. Asp72 and Glu140 together coordinate Mg(2+). CTP contacts are provided by residues 147–149 (DIE), 187–192 (KTKPTQ), and Lys223. Residues 187 to 192 (KTKPTQ) and Lys223 each bind UTP. 239 to 241 (KDV) is an ATP binding site. One can recognise a Glutamine amidotransferase type-1 domain in the interval 291 to 542 (TIGMIGKYVE…VKAAGEYQKR (252 aa)). Position 352 (Gly352) interacts with L-glutamine. Cys379 acts as the Nucleophile; for glutamine hydrolysis in catalysis. L-glutamine is bound by residues 380–383 (LGMQ), Glu403, and Arg470. Active-site residues include His515 and Glu517.

Belongs to the CTP synthase family. As to quaternary structure, homotetramer.

It catalyses the reaction UTP + L-glutamine + ATP + H2O = CTP + L-glutamate + ADP + phosphate + 2 H(+). The catalysed reaction is L-glutamine + H2O = L-glutamate + NH4(+). It carries out the reaction UTP + NH4(+) + ATP = CTP + ADP + phosphate + 2 H(+). It functions in the pathway pyrimidine metabolism; CTP biosynthesis via de novo pathway; CTP from UDP: step 2/2. Its activity is regulated as follows. Allosterically activated by GTP, when glutamine is the substrate; GTP has no effect on the reaction when ammonia is the substrate. The allosteric effector GTP functions by stabilizing the protein conformation that binds the tetrahedral intermediate(s) formed during glutamine hydrolysis. Inhibited by the product CTP, via allosteric rather than competitive inhibition. Catalyzes the ATP-dependent amination of UTP to CTP with either L-glutamine or ammonia as the source of nitrogen. Regulates intracellular CTP levels through interactions with the four ribonucleotide triphosphates. This Yersinia enterocolitica serotype O:8 / biotype 1B (strain NCTC 13174 / 8081) protein is CTP synthase.